Here is a 1356-residue protein sequence, read N- to C-terminus: MEHQLSPILSEIPPTVPVINGEPMCPVENYLLDPNAMAVCSNHSQIMTQHKMYNTWTCPQYWSQIVFVQVNPGEILTIKADDGSIQNIQGPADVPLIAPTGNLPPIYLPPGYMSQVVEENGIQKIVIVPQTLDYHVPMTAPVQQPFVAAPLLTYPQAPQLLYSPVQGEIPVPSYIQEPQQIPPLPLLPPLPLLPPAATFLFQEHLETYPQGRVNHNQFDERTVKIGEYSKKKIRDRQLGEHKINSTFSDTTLLLNKDIDMPAPPDSLCPYTVDTAPGTNTDNSTSDTYSLNTVLNTCTIDSAPRNMADNIPDTNTTDTITSSSAHTPSISTSNATFCSDNNNNITDSSISNYNQVTYDETHKPPDAKSIPSCTSQSASNPSVSENAHNPSSINDGLRPSDVASISENDHEETEANMGAGDNKQILGENQKKSQSSNASLKEHNTEDRTQPGCFNIEKPVVSNIQTRSATVSWTRKSNEKYDINSSMTHELALSSNGKNGTYKNIYTGNGVTVVLHDLQPCMVYFLRVTTIRNAEHRSVSEVVSFTTPGCEPDPPLAPTLISRTKNSLSLQWKASNDNGSKISSFLLEWDEGKGEDFKSCYSGRLKQHKLFKLNPSTKYSFRLAAKNDFGCSNFSETAVFYTSGKTPPAPLPPKLKEAGIYSLSLEWCAPTNPNPNDTLTYVLEMEEAKSGLGFKPKYNGEDLTCTIRNLQRNTMYKFRIFAYNLEGRSNPSGEVKYTTRPARPGCPNKPYVVGTIHAHQVTIGWDLPKDNGGMNISSYSLEVCENSDSANLWKIIYSGTRQEFLYDDLQAATTYKLRVFCTSPAGQSRPSDVLTIQTPTLPPESCRSQPLRGKTKSKDANLPDNRSVNGKPEAHVRGKKAKGPHQDRKVHPSSEKKCALGSQSMECGSVPARHPPSQCGTPVLTCKGPTCVIVSWEIPKCNGAEIIDYRLQWGQVEDSMHLIYTGPCLRYEVKGLVPATTYFCRVQAVNIVGVGMFGGTAKVTTPGTVPAMVPVLKEVESKVPAKLSSTCIAIRWEEPDCHGSPITGYNIEYGDKKVVTVKRITEYVLKDLQPNTTYRIRIQAINHYGLSPFSPSIRCKTKPLPPEPPQLNCVVYGHQSLRLKWGTVSSKKTLANFINYNVLMEDRSGRFSVIYRGPDVTHKVQKLSEYTEYKFKIQACNEAGEGPESDIYTFTTTKSPPTALKAPKVHPLNNNSCEIKWESLEPIKGDPIVYCLQVTTGKKANQIYKGPNTSFSFSNYHANSRYRFKVCAGRRYETSNGLQELWGPYSPSALFSTYKHHSGHGKGSGSKGKGNHNDKGEKCKTEMSDDTFVLTLLIGFALIAVLCAVAVQYLLIN.

Disordered regions lie at residues 303 to 341 (PRNM…SDNN), 356 to 402 (TYDE…SDVA), and 428 to 452 (NQKK…QPGC). The span at 308-341 (DNIPDTNTTDTITSSSAHTPSISTSNATFCSDNN) shows a compositional bias: low complexity. Residues 370–393 (PSCTSQSASNPSVSENAHNPSSIN) are compositionally biased toward polar residues. The span at 439–448 (LKEHNTEDRT) shows a compositional bias: basic and acidic residues. 4 consecutive Fibronectin type-III domains span residues 454 to 549 (NIEK…TPGC), 553 to 648 (PPLA…TPPA), 650 to 741 (LPPK…TRPA), and 745 to 842 (CPNK…TLPP). Over residues 825–838 (GQSRPSDVLTIQTP) the composition is skewed to polar residues. Positions 825–894 (GQSRPSDVLT…QDRKVHPSSE (70 aa)) are disordered. Residues 883–894 (PHQDRKVHPSSE) are compositionally biased toward basic and acidic residues. Fibronectin type-III domains lie at 914–1007 (PPSQ…TPGT), 1017–1103 (EVES…TKPL), 1104–1199 (PPEP…TKSP), and 1202–1299 (ALKA…TYKH). Residues 1299–1320 (HHSGHGKGSGSKGKGNHNDKGE) are disordered. A helical membrane pass occupies residues 1330-1350 (TFVLTLLIGFALIAVLCAVAV). Over 1351–1356 (QYLLIN) the chain is Cytoplasmic.

Belongs to the FNDC3 family.

It localises to the membrane. The chain is Fibronectin type III domain containing protein 3C1 (Fndc3c1) from Mus musculus (Mouse).